The sequence spans 138 residues: Acidic phospholipase A2 VP7 (138 aa).

An N-terminal signal peptide occupies residues 1–16; it reads MRTLWIVAVCLMGVEG. 7 disulfides stabilise this stretch: C42-C131, C44-C60, C59-C111, C65-C138, C66-C104, C73-C97, and C91-C102. Y43, G45, and G47 together coordinate Ca(2+). The active site involves H63. Position 64 (D64) interacts with Ca(2+). The active site involves D105.

It belongs to the phospholipase A2 family. Group II subfamily. D49 sub-subfamily. In terms of assembly, does not form a complex. It depends on Ca(2+) as a cofactor. Expressed by the venom gland.

It localises to the secreted. It carries out the reaction a 1,2-diacyl-sn-glycero-3-phosphocholine + H2O = a 1-acyl-sn-glycero-3-phosphocholine + a fatty acid + H(+). In terms of biological role, snake venom phospholipase A2 (PLA2) that is not toxic by itself, but the synergistical mixture of a basic and this acidic protein is lethal. PLA2 catalyzes the calcium-dependent hydrolysis of the 2-acyl groups in 3-sn-phosphoglycerides. The chain is Acidic phospholipase A2 VP7 from Daboia palaestinae (Palestine viper).